A 457-amino-acid chain; its full sequence is Bifunctional protein GlmU (457 aa).

A pyrophosphorylase region spans residues 1–230; that stretch reads MLNVVILAAG…SWETLGVNSR (230 aa). UDP-N-acetyl-alpha-D-glucosamine-binding positions include 7–10, K21, Q73, 78–79, 104–106, G140, E155, N170, and N228; these read LAAG, GT, and YGD. Position 106 (D106) interacts with Mg(2+). N228 contacts Mg(2+). The tract at residues 231–251 is linker; the sequence is VQQAQLERAWQSELARRQLEA. The segment at 252-457 is N-acetyltransferase; the sequence is GVTLADPARF…EGWKRPVKKS (206 aa). UDP-N-acetyl-alpha-D-glucosamine-binding residues include R334 and K352. The active-site Proton acceptor is H364. Y367 and N378 together coordinate UDP-N-acetyl-alpha-D-glucosamine. Residues A381, 387 to 388, S406, A424, and R441 contribute to the acetyl-CoA site; that span reads NY.

The protein in the N-terminal section; belongs to the N-acetylglucosamine-1-phosphate uridyltransferase family. It in the C-terminal section; belongs to the transferase hexapeptide repeat family. As to quaternary structure, homotrimer. The cofactor is Mg(2+).

It is found in the cytoplasm. The enzyme catalyses alpha-D-glucosamine 1-phosphate + acetyl-CoA = N-acetyl-alpha-D-glucosamine 1-phosphate + CoA + H(+). It carries out the reaction N-acetyl-alpha-D-glucosamine 1-phosphate + UTP + H(+) = UDP-N-acetyl-alpha-D-glucosamine + diphosphate. It participates in nucleotide-sugar biosynthesis; UDP-N-acetyl-alpha-D-glucosamine biosynthesis; N-acetyl-alpha-D-glucosamine 1-phosphate from alpha-D-glucosamine 6-phosphate (route II): step 2/2. The protein operates within nucleotide-sugar biosynthesis; UDP-N-acetyl-alpha-D-glucosamine biosynthesis; UDP-N-acetyl-alpha-D-glucosamine from N-acetyl-alpha-D-glucosamine 1-phosphate: step 1/1. It functions in the pathway bacterial outer membrane biogenesis; LPS lipid A biosynthesis. In terms of biological role, catalyzes the last two sequential reactions in the de novo biosynthetic pathway for UDP-N-acetylglucosamine (UDP-GlcNAc). The C-terminal domain catalyzes the transfer of acetyl group from acetyl coenzyme A to glucosamine-1-phosphate (GlcN-1-P) to produce N-acetylglucosamine-1-phosphate (GlcNAc-1-P), which is converted into UDP-GlcNAc by the transfer of uridine 5-monophosphate (from uridine 5-triphosphate), a reaction catalyzed by the N-terminal domain. In Bordetella bronchiseptica (strain ATCC BAA-588 / NCTC 13252 / RB50) (Alcaligenes bronchisepticus), this protein is Bifunctional protein GlmU.